A 91-amino-acid chain; its full sequence is Uteroglobin (91 aa).

Positions 1-21 (MKLTITLALVTLALLCSPASA) are cleaved as a signal peptide.

Belongs to the secretoglobin family. Antiparallel homodimer; disulfide-linked. Interaction with LMBR1L is controversial.

The protein resides in the secreted. In terms of biological role, uteroglobin binds progesterone specifically and with high affinity. It may regulate progesterone concentrations reaching the blastocyst. It is also a potent inhibitor of phospholipase A2. The protein is Uteroglobin (SCGB1A1) of Lepus capensis (Brown hare).